The following is an 822-amino-acid chain: LPS-assembly protein LptD (822 aa).

The first 37 residues, Met1 to Ala37, serve as a signal peptide directing secretion. Residues Gln38–Val97 are disordered.

Belongs to the LptD family. In terms of assembly, component of the lipopolysaccharide transport and assembly complex. Interacts with LptE and LptA.

It is found in the cell outer membrane. Together with LptE, is involved in the assembly of lipopolysaccharide (LPS) at the surface of the outer membrane. This chain is LPS-assembly protein LptD, found in Polaromonas sp. (strain JS666 / ATCC BAA-500).